The following is a 260-amino-acid chain: Cytosolic Fe-S cluster assembly factor Nubp2 homolog (260 aa).

Gly-14 to Ser-21 serves as a coordination point for ATP. The [4Fe-4S] cluster site is built by Cys-188 and Cys-191.

The protein belongs to the Mrp/NBP35 ATP-binding proteins family. NUBP2/CFD1 subfamily. Heterotetramer of 2 Nubp1 and 2 Nubp2 chains. [4Fe-4S] cluster serves as cofactor.

The protein localises to the cytoplasm. Its function is as follows. Component of the cytosolic iron-sulfur (Fe/S) protein assembly (CIA) machinery. Required for maturation of extramitochondrial Fe-S proteins. The Nubp1-Nubp2 heterotetramer forms a Fe-S scaffold complex, mediating the de novo assembly of an Fe-S cluster and its transfer to target apoproteins. The protein is Cytosolic Fe-S cluster assembly factor Nubp2 homolog of Drosophila simulans (Fruit fly).